Consider the following 269-residue polypeptide: Hydroxyethylthiazole kinase (269 aa).

Met45 serves as a coordination point for substrate. Arg121 and Thr167 together coordinate ATP. Gly194 contacts substrate.

Belongs to the Thz kinase family. Mg(2+) is required as a cofactor.

It carries out the reaction 5-(2-hydroxyethyl)-4-methylthiazole + ATP = 4-methyl-5-(2-phosphooxyethyl)-thiazole + ADP + H(+). It participates in cofactor biosynthesis; thiamine diphosphate biosynthesis; 4-methyl-5-(2-phosphoethyl)-thiazole from 5-(2-hydroxyethyl)-4-methylthiazole: step 1/1. In terms of biological role, catalyzes the phosphorylation of the hydroxyl group of 4-methyl-5-beta-hydroxyethylthiazole (THZ). The chain is Hydroxyethylthiazole kinase from Bacillus mycoides (strain KBAB4) (Bacillus weihenstephanensis).